Reading from the N-terminus, the 147-residue chain is Large ribosomal subunit protein uL13 (147 aa).

Belongs to the universal ribosomal protein uL13 family. Part of the 50S ribosomal subunit.

In terms of biological role, this protein is one of the early assembly proteins of the 50S ribosomal subunit, although it is not seen to bind rRNA by itself. It is important during the early stages of 50S assembly. The protein is Large ribosomal subunit protein uL13 of Lactobacillus johnsonii (strain CNCM I-12250 / La1 / NCC 533).